The chain runs to 387 residues: Succinate--CoA ligase [ADP-forming] subunit beta (387 aa).

Residues 9-236 enclose the ATP-grasp domain; sequence RDLFESYGVP…AAAADPLEAK (228 aa). ATP contacts are provided by residues Lys-45, 52–54, Ala-94, and Glu-99; that span reads GRG. Mg(2+) contacts are provided by Asn-191 and Asp-205. Residues Asn-256 and 318 to 320 each bind substrate; that span reads GIT.

This sequence belongs to the succinate/malate CoA ligase beta subunit family. Heterotetramer of two alpha and two beta subunits. Requires Mg(2+) as cofactor.

It carries out the reaction succinate + ATP + CoA = succinyl-CoA + ADP + phosphate. It catalyses the reaction GTP + succinate + CoA = succinyl-CoA + GDP + phosphate. It participates in carbohydrate metabolism; tricarboxylic acid cycle; succinate from succinyl-CoA (ligase route): step 1/1. Functionally, succinyl-CoA synthetase functions in the citric acid cycle (TCA), coupling the hydrolysis of succinyl-CoA to the synthesis of either ATP or GTP and thus represents the only step of substrate-level phosphorylation in the TCA. The beta subunit provides nucleotide specificity of the enzyme and binds the substrate succinate, while the binding sites for coenzyme A and phosphate are found in the alpha subunit. This chain is Succinate--CoA ligase [ADP-forming] subunit beta, found in Clavibacter michiganensis subsp. michiganensis (strain NCPPB 382).